Reading from the N-terminus, the 310-residue chain is N-acetyl-gamma-glutamyl-phosphate reductase (310 aa).

The active site involves Cys117.

The protein belongs to the NAGSA dehydrogenase family. Type 2 subfamily.

It is found in the cytoplasm. The catalysed reaction is N-acetyl-L-glutamate 5-semialdehyde + phosphate + NADP(+) = N-acetyl-L-glutamyl 5-phosphate + NADPH + H(+). The protein operates within amino-acid biosynthesis; L-arginine biosynthesis; N(2)-acetyl-L-ornithine from L-glutamate: step 3/4. Functionally, catalyzes the NADPH-dependent reduction of N-acetyl-5-glutamyl phosphate to yield N-acetyl-L-glutamate 5-semialdehyde. The sequence is that of N-acetyl-gamma-glutamyl-phosphate reductase from Rhizobium etli (strain CIAT 652).